Consider the following 549-residue polypeptide: Carboxylesterase 1C (549 aa).

A signal peptide spans 1 to 18 (MWLCALVWASLAVCPIWG). A glycan (N-linked (GlcNAc...) asparagine) is linked at asparagine 79. Residues cysteine 87 and cysteine 116 are joined by a disulfide bond. The active-site Acyl-ester intermediate is serine 221. Residues cysteine 273 and cysteine 284 are joined by a disulfide bond. Asparagine 274, asparagine 275, and asparagine 302 each carry an N-linked (GlcNAc...) asparagine glycan. Glutamate 340 functions as the Charge relay system in the catalytic mechanism. The N-linked (GlcNAc...) asparagine glycan is linked to asparagine 375. The active-site Charge relay system is histidine 453. Serine 471 bears the Phosphoserine mark. The N-linked (GlcNAc...) asparagine glycan is linked to asparagine 476. A Prevents secretion from ER motif is present at residues 546–549 (TEHT).

Belongs to the type-B carboxylesterase/lipase family.

Its subcellular location is the endoplasmic reticulum lumen. It catalyses the reaction a carboxylic ester + H2O = an alcohol + a carboxylate + H(+). Involved in the detoxification of xenobiotics and in the activation of ester and amide prodrugs. Involved in the extracellular metabolism of lung surfactant. This chain is Carboxylesterase 1C (Ces1c), found in Rattus norvegicus (Rat).